Consider the following 478-residue polypeptide: MAPKRRGKKGKAKGNAVVDGVAPEDMSKEQVEEHVARIREELDREREERNYFQLERDKIHTFWEITRRQLEEKKAELRNKDREMEEAEERHQVEIKVYKQKVKHLLYEHQNNLAEVKTEGTVVMKLAQKEHRAQEGALRKDMRVLKVELKEQELANEVVIKNLRLKQAEEITKMRNDFERQVREIEAKYDKKMKMLRDELDLRRKTEIHEVEERKNGQISTLMQRHEEAFTDIKNYYNDITLNNLALINSLKEQMEDMRKKEEYLEREMAEVSLQNKRLAEPLQRAKEEMSEMQKRLGNHERDKQILACTKARLKVTEKELKDLKWEHEILEQRFIKVQQEREELYRKFTAAIQEVQQKTGFKNLVLERKLQALNAAVEKREVQFNEVLAASNLDPTALTLVSRKLEDVLESKNTTIKDLQYELARVCKAHNDLLRTYEAKLLAFGIPLDNVGFKPLETAVIGQTLGQGPAGLVGAPT.

Basic residues predominate over residues 1–12 (MAPKRRGKKGKA). Residues 1–32 (MAPKRRGKKGKAKGNAVVDGVAPEDMSKEQVE) form a disordered region. A regulates microtubule-binding region spans residues 1-114 (MAPKRRGKKG…LLYEHQNNLA (114 aa)). 2 coiled-coil regions span residues 24–201 (EDMS…DELD) and 243–427 (NNLA…LARV). The tract at residues 115–258 (EVKTEGTVVM…NSLKEQMEDM (144 aa)) is microtubule-binding. Positions 357-478 (QQKTGFKNLV…GPAGLVGAPT (122 aa)) are interaction with SMO.

It belongs to the DRC4 family. In terms of assembly, component of the nexin-dynein regulatory complex (N-DRC). Interacts with microtubules. Interacts with SMO. Interacts (via coiled-coil domains) with RAB3B (in GTP-bound form). Interacts with DRC1. Interacts with DRC7.

The protein localises to the cytoplasm. It is found in the cytoskeleton. Its subcellular location is the cell projection. The protein resides in the cilium. It localises to the flagellum. The protein localises to the cilium axoneme. It is found in the cilium basal body. Its subcellular location is the golgi apparatus. The protein resides in the flagellum axoneme. Functionally, component of the nexin-dynein regulatory complex (N-DRC), a key regulator of ciliary/flagellar motility which maintains the alignment and integrity of the distal axoneme and regulates microtubule sliding in motile axonemes. Plays an important role in the assembly of the N-DRC linker. Plays dual roles at both the primary (or non-motile) cilia to regulate hedgehog signaling and in motile cilia to coordinate cilia movement. Required for proper motile cilia functioning. Positively regulates ciliary smoothened (SMO)-dependent Hedgehog (Hh) signaling pathway by facilitating the trafficking of SMO into the cilium and the stimulation of SMO activity in a GRK2-dependent manner. The sequence is that of Dynein regulatory complex subunit 4 (Gas8) from Rattus norvegicus (Rat).